The primary structure comprises 374 residues: 4-hydroxy-3-methylbut-2-en-1-yl diphosphate synthase (flavodoxin) (374 aa).

[4Fe-4S] cluster contacts are provided by C272, C275, C307, and E314.

This sequence belongs to the IspG family. The cofactor is [4Fe-4S] cluster.

It carries out the reaction (2E)-4-hydroxy-3-methylbut-2-enyl diphosphate + oxidized [flavodoxin] + H2O + 2 H(+) = 2-C-methyl-D-erythritol 2,4-cyclic diphosphate + reduced [flavodoxin]. Its pathway is isoprenoid biosynthesis; isopentenyl diphosphate biosynthesis via DXP pathway; isopentenyl diphosphate from 1-deoxy-D-xylulose 5-phosphate: step 5/6. Converts 2C-methyl-D-erythritol 2,4-cyclodiphosphate (ME-2,4cPP) into 1-hydroxy-2-methyl-2-(E)-butenyl 4-diphosphate. In Acidiphilium cryptum (strain JF-5), this protein is 4-hydroxy-3-methylbut-2-en-1-yl diphosphate synthase (flavodoxin).